A 249-amino-acid polypeptide reads, in one-letter code: 5'-nucleotidase SurE (249 aa).

Residues Asp-8, Asp-9, Ser-39, and Asn-91 each coordinate a divalent metal cation.

The protein belongs to the SurE nucleotidase family. It depends on a divalent metal cation as a cofactor.

Its subcellular location is the cytoplasm. It carries out the reaction a ribonucleoside 5'-phosphate + H2O = a ribonucleoside + phosphate. Its function is as follows. Nucleotidase that shows phosphatase activity on nucleoside 5'-monophosphates. This is 5'-nucleotidase SurE from Pseudomonas savastanoi pv. phaseolicola (strain 1448A / Race 6) (Pseudomonas syringae pv. phaseolicola (strain 1448A / Race 6)).